Reading from the N-terminus, the 431-residue chain is 3-deoxy-D-manno-octulosonic acid transferase (431 aa).

The helical; Signal-anchor transmembrane segment at 5 to 27 (WLTSRLYDAFLVCAFFVSAPRIF) threads the bilayer. Glu67 functions as the Proton acceptor in the catalytic mechanism. CMP contacts are provided by residues 275–276 (PR), 315–317 (MGV), and 342–345 (NLLE).

Belongs to the glycosyltransferase group 1 family. Glycosyltransferase 30 subfamily.

It is found in the cell inner membrane. It carries out the reaction lipid IVA (E. coli) + CMP-3-deoxy-beta-D-manno-octulosonate = alpha-Kdo-(2-&gt;6)-lipid IVA (E. coli) + CMP + H(+). The enzyme catalyses alpha-Kdo-(2-&gt;6)-lipid IVA (E. coli) + CMP-3-deoxy-beta-D-manno-octulosonate = alpha-Kdo-(2-&gt;4)-alpha-Kdo-(2-&gt;6)-lipid IVA (E. coli) + CMP + H(+). The catalysed reaction is alpha-Kdo-(2-&gt;4)-alpha-Kdo-(2-&gt;6)-lipid IVA (E. coli) + CMP-3-deoxy-beta-D-manno-octulosonate = alpha-Kdo-(2-&gt;8)-alpha-Kdo-(2-&gt;4)-alpha-Kdo-(2-&gt;6)-lipid IVA (E. coli) + CMP + H(+). Its pathway is bacterial outer membrane biogenesis; LPS core biosynthesis. Its function is as follows. Involved in lipopolysaccharide (LPS) biosynthesis. Catalyzes the transfer of three 3-deoxy-D-manno-octulosonate (Kdo) residues from CMP-Kdo to lipid IV(A), the tetraacyldisaccharide-1,4'-bisphosphate precursor of lipid A. Thus generates the genus-specific LPS epitope of Chlamydia, composed of the trisaccharide alpha-Kdo-(2-&gt;8)-alpha-Kdo-(2-&gt;4)-alpha-Kdo. The sequence is that of 3-deoxy-D-manno-octulosonic acid transferase (waaA) from Chlamydia trachomatis serovar D (strain ATCC VR-885 / DSM 19411 / UW-3/Cx).